The sequence spans 133 residues: Holo-[acyl-carrier-protein] synthase (133 aa).

Residues Asp-8 and Glu-57 each contribute to the Mg(2+) site.

The protein belongs to the P-Pant transferase superfamily. AcpS family. The cofactor is Mg(2+).

It is found in the cytoplasm. It carries out the reaction apo-[ACP] + CoA = holo-[ACP] + adenosine 3',5'-bisphosphate + H(+). Transfers the 4'-phosphopantetheine moiety from coenzyme A to a Ser of acyl-carrier-protein. This is Holo-[acyl-carrier-protein] synthase from Chelativorans sp. (strain BNC1).